Reading from the N-terminus, the 494-residue chain is Ribose import ATP-binding protein RbsA (494 aa).

2 consecutive ABC transporter domains span residues 2–239 (IDMR…VGRQ) and 251–493 (IGEE…TGGN). 34-41 (GENGAGKS) serves as a coordination point for ATP.

This sequence belongs to the ABC transporter superfamily. Ribose importer (TC 3.A.1.2.1) family. As to quaternary structure, the complex is composed of an ATP-binding protein (RbsA), two transmembrane proteins (RbsC) and a solute-binding protein (RbsB).

The protein resides in the cell membrane. It carries out the reaction D-ribose(out) + ATP + H2O = D-ribose(in) + ADP + phosphate + H(+). Functionally, part of the ABC transporter complex RbsABC involved in ribose import. Responsible for energy coupling to the transport system. In Geobacillus kaustophilus (strain HTA426), this protein is Ribose import ATP-binding protein RbsA.